Reading from the N-terminus, the 117-residue chain is Large ribosomal subunit protein uL18 (117 aa).

The protein belongs to the universal ribosomal protein uL18 family. In terms of assembly, part of the 50S ribosomal subunit; part of the 5S rRNA/L5/L18/L25 subcomplex. Contacts the 5S and 23S rRNAs.

Functionally, this is one of the proteins that bind and probably mediate the attachment of the 5S RNA into the large ribosomal subunit, where it forms part of the central protuberance. The sequence is that of Large ribosomal subunit protein uL18 from Pectobacterium atrosepticum (strain SCRI 1043 / ATCC BAA-672) (Erwinia carotovora subsp. atroseptica).